The chain runs to 57 residues: Large ribosomal subunit protein bL32c (57 aa).

This sequence belongs to the bacterial ribosomal protein bL32 family.

Its subcellular location is the plastid. It is found in the chloroplast. The polypeptide is Large ribosomal subunit protein bL32c (Drimys granadensis).